The primary structure comprises 155 residues: Nascent polypeptide-associated complex subunit beta (155 aa).

2 disordered regions span residues 1–35 (MDQA…SGAD) and 116–155 (LAES…SNVE). Residues 20-30 (TPRRKVKKVHK) are compositionally biased toward basic residues. The region spanning 33–98 (GADDKKLQAT…GEEKELTELV (66 aa)) is the NAC-A/B domain. Positions 136 to 155 (DEEDDIPDLVEGENFESNVE) are enriched in acidic residues.

It belongs to the NAC-beta family. As to quaternary structure, part of the nascent polypeptide-associated complex (NAC), consisting of egd2 and egd1. NAC associates with ribosomes via egd1.

The protein resides in the cytoplasm. It localises to the nucleus. Functionally, component of the nascent polypeptide-associated complex (NAC), a dynamic component of the ribosomal exit tunnel, protecting the emerging polypeptides from interaction with other cytoplasmic proteins to ensure appropriate nascent protein targeting. The NAC complex also promotes mitochondrial protein import by enhancing productive ribosome interactions with the outer mitochondrial membrane and blocks the inappropriate interaction of ribosomes translating non-secretory nascent polypeptides with translocation sites in the membrane of the endoplasmic reticulum. EGD1 may act as a transcription factor that exert a negative effect on the expression of several genes that are transcribed by RNA polymerase II. The sequence is that of Nascent polypeptide-associated complex subunit beta (egd1) from Aspergillus niger (strain ATCC MYA-4892 / CBS 513.88 / FGSC A1513).